The primary structure comprises 670 residues: Sodium, potassium, lithium and rubidium/H(+) antiporter (670 aa).

A run of 11 helical transmembrane segments spans residues 5 to 27 (LVVL…IPFI), 46 to 66 (GLHF…PLLF), 83 to 103 (PILL…GYTI), 105 to 125 (WMIP…LSPT), 156 to 176 (ASGL…AFSL), 182 to 202 (SFVF…FLII), 228 to 248 (FVIY…VVAG), 276 to 296 (IILF…IPDV), 314 to 334 (YILV…LFFW), 355 to 375 (LLIS…FSIP), and 389 to 409 (LILF…TVVL).

The protein belongs to the monovalent cation:proton antiporter 1 (CPA1) transporter (TC 2.A.36) family. Nhak (TC 2.A.36.3.2) subfamily.

Its subcellular location is the cell membrane. Functionally, transporter involved in the efflux of sodium, potassium, lithium and rubidium. This chain is Sodium, potassium, lithium and rubidium/H(+) antiporter (nhaK), found in Bacillus subtilis (strain 168).